We begin with the raw amino-acid sequence, 230 residues long: Cysteine S-methyltransferase OspZ (230 aa).

Residues 49-52 (GITR) form an interaction with host proteins TAB2, TAB3 and ZRANB3 region. Positions 92, 98, 107, 111, 204, and 208 each coordinate S-adenosyl-L-methionine.

It belongs to the NleE/OspZ family. In terms of assembly, monomer.

It is found in the secreted. The protein localises to the host cytoplasm. It localises to the host nucleus. The catalysed reaction is L-cysteinyl-[protein] + S-adenosyl-L-methionine = S-methyl-L-cysteinyl-[protein] + S-adenosyl-L-homocysteine + H(+). Cysteine methyltransferase effector that inhibits host cell NF-kappa-B activation by preventing nuclear translocation of host protein RELA/p65. Acts by mediating cysteine methylation of host proteins TAB2 and TAB3: methylation of a conserved cysteine residue of the RanBP2-type zinc finger (NZF) of TAB2 and TAB3 disrupts zinc-binding, thereby inactivating the ubiquitin chain-binding activity of TAB2 and TAB3, leading to NF-kappa-B inactivation. Also mediates cysteine methylation of host protein ZRANB3, inactivating its ability to bind ubiquitin chains. This chain is Cysteine S-methyltransferase OspZ, found in Shigella flexneri.